Reading from the N-terminus, the 322-residue chain is Ras-like protein 2 (322 aa).

GTP contacts are provided by residues 20-25 (GVGKSA), 36-42 (VDEYDPT), 66-67 (AG), and 123-126 (NKSD). Positions 39-47 (YDPTIEDSY) match the Effector region motif. Residue Lys-131 forms a Glycyl lysine isopeptide (Lys-Gly) (interchain with G-Cter in ubiquitin) linkage. A GTP-binding site is contributed by 153-155 (SAK). Residues 178–322 (YNKTLTENDN…SGSGGCCIIS (145 aa)) are disordered. Polar residues predominate over residues 180–205 (KTLTENDNSKQTSQDTKGSGANSVPR). A phosphoserine mark is found at Ser-198, Ser-202, Ser-207, Ser-214, Ser-235, and Ser-238. Polar residues predominate over residues 215 to 252 (NAANGKNVNSSTTVVNARNASIESKTGLAGNQATNGKT). The segment covering 261–284 (NSTGQAGQANAQSANTVNNRVNNN) has biased composition (low complexity). Over residues 285–294 (SKAGQVSNAK) the composition is skewed to polar residues. Cys-318 carries the S-palmitoyl cysteine lipid modification. Cys-319 carries the post-translational modification Cysteine methyl ester. Cys-319 carries S-farnesyl cysteine lipidation. The propeptide at 320 to 322 (IIS) is removed in mature form.

Belongs to the small GTPase superfamily. Ras family. In terms of processing, farnesylated by RAM1-RAM2, which is required for targeting RAS2 to the cytoplasmic site of the endoplasmic reticulum, where proteolytic processing of the C-terminus by RCE1 and methylation of the resulting carboxyl group by STE14 occurs. Palmitoylated by the ERF2-SHR5 complex, which is required for proper plasma membrane localization of RAS2.

It localises to the cell membrane. The catalysed reaction is GTP + H2O = GDP + phosphate + H(+). Alternates between an inactive form bound to GDP and an active form bound to GTP. Activated by guanine nucleotide-exchange factor (GEF) CDC25 and inactivated by GTPase-activating proteins (GAPs) IRA1 and IRA2. Functionally, the S.cerevisiae Ras proteins modulate the activity of the adenylate cyclase catalytic subunit and therefore affect the biosynthesis of cyclic-AMP. This chain is Ras-like protein 2 (RAS2), found in Saccharomyces cerevisiae (strain ATCC 204508 / S288c) (Baker's yeast).